A 130-amino-acid polypeptide reads, in one-letter code: Small ribosomal subunit protein uS9 (130 aa).

The protein belongs to the universal ribosomal protein uS9 family.

The sequence is that of Small ribosomal subunit protein uS9 from Hamiltonella defensa subsp. Acyrthosiphon pisum (strain 5AT).